The following is a 427-amino-acid chain: Enolase (427 aa).

Q163 lines the (2R)-2-phosphoglycerate pocket. The Proton donor role is filled by E205. Residues D242, E285, and D312 each contribute to the Mg(2+) site. (2R)-2-phosphoglycerate-binding residues include K337, R366, S367, and K388. Residue K337 is the Proton acceptor of the active site.

This sequence belongs to the enolase family. It depends on Mg(2+) as a cofactor.

It localises to the cytoplasm. It is found in the secreted. The protein localises to the cell surface. It catalyses the reaction (2R)-2-phosphoglycerate = phosphoenolpyruvate + H2O. It functions in the pathway carbohydrate degradation; glycolysis; pyruvate from D-glyceraldehyde 3-phosphate: step 4/5. Catalyzes the reversible conversion of 2-phosphoglycerate (2-PG) into phosphoenolpyruvate (PEP). It is essential for the degradation of carbohydrates via glycolysis. The polypeptide is Enolase (Janthinobacterium sp. (strain Marseille) (Minibacterium massiliensis)).